Reading from the N-terminus, the 220-residue chain is Translation initiation factor 6 (220 aa).

Belongs to the eIF-6 family.

Its function is as follows. Binds to the 50S ribosomal subunit and prevents its association with the 30S ribosomal subunit to form the 70S initiation complex. This is Translation initiation factor 6 from Pyrobaculum aerophilum (strain ATCC 51768 / DSM 7523 / JCM 9630 / CIP 104966 / NBRC 100827 / IM2).